The chain runs to 82 residues: Penaeidin-3g (82 aa).

Residues 1–19 (MRLVVCLVFLASFALVCQG) form the signal peptide. Gln20 carries the pyrrolidone carboxylic acid modification. Cystine bridges form between Cys51–Cys66, Cys55–Cys73, and Cys67–Cys74. Ser81 bears the Serine amide mark.

It belongs to the penaeidin family.

It is found in the cytoplasmic granule. Antibacterial and antifungal activity. Presents chitin-binding activity. This Penaeus vannamei (Whiteleg shrimp) protein is Penaeidin-3g.